The sequence spans 650 residues: DNA gyrase subunit B (650 aa).

One can recognise a Toprim domain in the interval 429–543; the sequence is NELFIVEGDS…AGYVYIAQPP (115 aa). Mg(2+) is bound by residues E435, D508, and D510.

It belongs to the type II topoisomerase GyrB family. Heterotetramer, composed of two GyrA and two GyrB chains. In the heterotetramer, GyrA contains the active site tyrosine that forms a transient covalent intermediate with DNA, while GyrB binds cofactors and catalyzes ATP hydrolysis. The cofactor is Mg(2+). Requires Mn(2+) as cofactor. Ca(2+) is required as a cofactor.

Its subcellular location is the cytoplasm. It carries out the reaction ATP-dependent breakage, passage and rejoining of double-stranded DNA.. In terms of biological role, a type II topoisomerase that negatively supercoils closed circular double-stranded (ds) DNA in an ATP-dependent manner to modulate DNA topology and maintain chromosomes in an underwound state. Negative supercoiling favors strand separation, and DNA replication, transcription, recombination and repair, all of which involve strand separation. Also able to catalyze the interconversion of other topological isomers of dsDNA rings, including catenanes and knotted rings. Type II topoisomerases break and join 2 DNA strands simultaneously in an ATP-dependent manner. This Streptococcus pyogenes serotype M1 protein is DNA gyrase subunit B.